A 48-amino-acid polypeptide reads, in one-letter code: Probable antitoxin PhoAT (48 aa).

Belongs to the PhoAT antitoxin family. Interacts with toxin PhoH2.

Its function is as follows. Probable antitoxin component of a type II toxin-antitoxin (TA) system. The probable cognate antitoxin is PhoAT; the toxin gene can be expressed in the absence of the antitoxin gene in M.smegmatis strain mc(2)155. This Mycolicibacterium smegmatis (strain ATCC 700084 / mc(2)155) (Mycobacterium smegmatis) protein is Probable antitoxin PhoAT.